Reading from the N-terminus, the 91-residue chain is DNA-directed RNA polymerase subunit omega (91 aa).

It belongs to the RNA polymerase subunit omega family. As to quaternary structure, the RNAP catalytic core consists of 2 alpha, 1 beta, 1 beta' and 1 omega subunit. When a sigma factor is associated with the core the holoenzyme is formed, which can initiate transcription.

The catalysed reaction is RNA(n) + a ribonucleoside 5'-triphosphate = RNA(n+1) + diphosphate. In terms of biological role, promotes RNA polymerase assembly. Latches the N- and C-terminal regions of the beta' subunit thereby facilitating its interaction with the beta and alpha subunits. The sequence is that of DNA-directed RNA polymerase subunit omega from Psychromonas ingrahamii (strain DSM 17664 / CCUG 51855 / 37).